The chain runs to 441 residues: GTPase Der (441 aa).

EngA-type G domains follow at residues 2 to 164 (QKVA…PADE) and 173 to 343 (IRIS…EKWQ). Residues 8-15 (GRPNVGKS), 55-59 (DTGGL), 116-119 (NKID), 179-186 (GRPNVGKS), 226-230 (DTAGI), and 288-291 (NKWD) each bind GTP. Positions 344–428 (SRIPTAELNR…PVRLKWKEKG (85 aa)) constitute a KH-like domain.

Belongs to the TRAFAC class TrmE-Era-EngA-EngB-Septin-like GTPase superfamily. EngA (Der) GTPase family. In terms of assembly, associates with the 50S ribosomal subunit.

GTPase that plays an essential role in the late steps of ribosome biogenesis. The protein is GTPase Der of Deinococcus geothermalis (strain DSM 11300 / CIP 105573 / AG-3a).